The following is a 216-amino-acid chain: Sugar transporter SWEET1 (216 aa).

The next 7 membrane-spanning stretches (helical) occupy residues 3 to 23 (WMWL…SSGL), 36 to 56 (ENIQ…WFYY), 65 to 85 (LMIV…AYLL), 96 to 116 (QVLV…LWIL), 125 to 145 (LGLF…ADLA), 157 to 177 (SFPL…YGLV), and 181 to 201 (LYIT…FWLF). The 85-residue stretch at 6–90 (LLSGACIVFT…GAYLLYSPER (85 aa)) folds into the MtN3/slv 1 domain. The MtN3/slv 2 domain occupies 124 to 206 (QLGLFCSVFT…RFWLFSQFPP (83 aa)).

The protein belongs to the SWEET sugar transporter family.

The protein resides in the golgi apparatus membrane. Its subcellular location is the cell membrane. Its function is as follows. Mediates sugar transport across membranes. The chain is Sugar transporter SWEET1 (slc50a1) from Xenopus laevis (African clawed frog).